The following is a 306-amino-acid chain: Non-specific ribonucleoside hydrolase RihC (306 aa).

His-235 is a catalytic residue.

It belongs to the IUNH family. RihC subfamily.

Its function is as follows. Hydrolyzes both purine and pyrimidine ribonucleosides with a broad-substrate specificity. This chain is Non-specific ribonucleoside hydrolase RihC, found in Salmonella enteritidis PT4 (strain P125109).